The primary structure comprises 415 residues: Squalene synthase clz20 (415 aa).

Asn-114 is a glycosylation site (N-linked (GlcNAc...) asparagine). Residues 395–415 form a helical membrane-spanning segment; that stretch reads ADTMYLAVLVLGVFGVVAAIL.

Belongs to the phytoene/squalene synthase family. Mg(2+) is required as a cofactor.

It is found in the membrane. The enzyme catalyses 2 (2E,6E)-farnesyl diphosphate + NADH + H(+) = squalene + 2 diphosphate + NAD(+). It carries out the reaction 2 (2E,6E)-farnesyl diphosphate + NADPH + H(+) = squalene + 2 diphosphate + NADP(+). The protein operates within terpene metabolism; lanosterol biosynthesis; lanosterol from farnesyl diphosphate: step 1/3. Squalene synthase; part of the gene cluster that mediates the biosynthesis of squalestatin S1 (SQS1, also known as zaragozic acid A), a heavily oxidized fungal polyketide that offers potent cholesterol lowering activity by targeting squalene synthase (SS). Catalyzes the condensation of 2 two farnesyl pyrophosphate moieties to form squalene. The presence of a gene encoding a squalene synthase supports the identification of the cluster as being responsible for SQS1 production and suggests a likely mechanism for self-resistance. The polypeptide is Squalene synthase clz20 (Cochliobolus lunatus (Filamentous fungus)).